A 158-amino-acid polypeptide reads, in one-letter code: N-alpha-acetyltransferase RimI (158 aa).

The N-acetyltransferase domain occupies 8–155 (VTIGALTRAD…DAYTMRRDSG (148 aa)).

This sequence belongs to the acetyltransferase family. RimI subfamily. As to quaternary structure, monomer. Interacts with TsaD. Interacts with GroS/GroES.

The enzyme catalyses N-terminal L-methionyl-L-alanyl-[protein] + acetyl-CoA = N-terminal N(alpha)-acetyl-L-methionyl-L-alanyl-[protein] + CoA + H(+). It catalyses the reaction N-terminal L-methionyl-L-seryl-[protein] + acetyl-CoA = N-terminal N(alpha)-acetyl-L-methionyl-L-seryl-[protein] + CoA + H(+). The catalysed reaction is N-terminal L-methionyl-L-valyl-[protein] + acetyl-CoA = N-terminal N(alpha)-acetyl-L-methionyl-L-valyl-[protein] + CoA + H(+). It carries out the reaction N-terminal L-methionyl-L-threonyl-[protein] + acetyl-CoA = N-terminal N(alpha)-acetyl-L-methionyl-L-threonyl-[protein] + CoA + H(+). The enzyme catalyses N-terminal L-methionyl-L-lysyl-[protein] + acetyl-CoA = N-terminal N(alpha)-acetyl-L-methionyl-L-lysyl-[protein] + CoA + H(+). It catalyses the reaction N-terminal L-methionyl-L-leucyl-[protein] + acetyl-CoA = N-terminal N(alpha)-acetyl-L-methionyl-L-leucyl-[protein] + CoA + H(+). The catalysed reaction is N-terminal L-methionyl-L-phenylalanyl-[protein] + acetyl-CoA = N-terminal N(alpha)-acetyl-L-methionyl-L-phenylalanyl-[protein] + CoA + H(+). It carries out the reaction N-terminal L-methionyl-L-tyrosyl-[protein] + acetyl-CoA = N-terminal N(alpha)-acetyl-L-methionyl-L-tyrosyl-[protein] + CoA + H(+). The enzyme catalyses N-terminal glycyl-[protein] + acetyl-CoA = N-terminal N(alpha)-acetylglycyl-[protein] + CoA + H(+). It catalyses the reaction N-terminal L-alanyl-[protein] + acetyl-CoA = N-terminal N(alpha)-acetyl-L-alanyl-[protein] + CoA + H(+). The catalysed reaction is N-terminal L-seryl-[protein] + acetyl-CoA = N-terminal N(alpha)-acetyl-L-seryl-[protein] + CoA + H(+). It carries out the reaction N-terminal L-valyl-[protein] + acetyl-CoA = N-terminal N(alpha)-acetyl-L-valyl-[protein] + CoA + H(+). The enzyme catalyses N-terminal L-cysteinyl-[protein] + acetyl-CoA = N-terminal N(alpha)-acetyl-L-cysteinyl-[protein] + CoA + H(+). It catalyses the reaction N-terminal L-threonyl-[protein] + acetyl-CoA = N-terminal N(alpha)-acetyl-L-threonyl-[protein] + CoA + H(+). N-alpha-acetyltransferase that specifically mediates the acetylation of N-terminal residues. Able to mediate acetylation of a wide variety of N-terminal residues, with preference for hydrophobic N-termini. Acetylates GroS/GroES and GroEL1. Able to acetylate the ribosomal protein bS18, but it is unclear whether it acetylates its N-terminal alanine residue. The chain is N-alpha-acetyltransferase RimI from Mycobacterium tuberculosis (strain ATCC 25618 / H37Rv).